Here is a 287-residue protein sequence, read N- to C-terminus: Protease HtpX (287 aa).

The next 2 membrane-spanning stretches (helical) occupy residues Val-4–Ile-24 and Gly-33–Ile-53. Residue His-139 coordinates Zn(2+). Glu-140 is a catalytic residue. His-143 contributes to the Zn(2+) binding site. 2 helical membrane-spanning segments follow: residues Leu-154–Ile-174 and Gly-195–Phe-215. Glu-220 contacts Zn(2+).

Belongs to the peptidase M48B family. Requires Zn(2+) as cofactor.

The protein localises to the cell inner membrane. The protein is Protease HtpX of Shewanella denitrificans (strain OS217 / ATCC BAA-1090 / DSM 15013).